Consider the following 346-residue polypeptide: Structure-specific endonuclease subunit SLX1 (346 aa).

Residues 22-105 (DFYGVYLLRS…QHPYQTRHIK (84 aa)) enclose the GIY-YIG domain. Residues 216–306 (CFICNETIDY…TPLQGKCLSC (91 aa)) form an SLX1-type zinc finger.

It belongs to the SLX1 family. In terms of assembly, forms a heterodimer with SLX4. Requires a divalent metal cation as cofactor.

The protein resides in the nucleus. Its function is as follows. Catalytic subunit of the SLX1-SLX4 structure-specific endonuclease that resolves DNA secondary structures generated during DNA repair and recombination. Has endonuclease activity towards branched DNA substrates, introducing single-strand cuts in duplex DNA close to junctions with ss-DNA. In Debaryomyces hansenii (strain ATCC 36239 / CBS 767 / BCRC 21394 / JCM 1990 / NBRC 0083 / IGC 2968) (Yeast), this protein is Structure-specific endonuclease subunit SLX1.